The sequence spans 698 residues: NAD(+)--arginine ADP-ribosyltransferase (698 aa).

Positions 375 to 628 constitute a TR mART core domain; that stretch reads EITKNAWNAA…KLIQAEVMTT (254 aa). Active-site residues include Arg-481, Ser-506, and Glu-590.

Belongs to the Tevenvirinae NAD(+)--arginine ADP-ribosyltransferase family. Post-translationally, proteolytic cleavages at the N- and C-termini by the prohead core protein protease give rise to the mature enzyme.

It localises to the virion. The enzyme catalyses L-arginyl-[protein] + NAD(+) = N(omega)-(ADP-D-ribosyl)-L-arginyl-[protein] + nicotinamide + H(+). Its function is as follows. ADP-ribosyltransferase that efficiently ADP-ribosylates one of the two alpha subunits of host RNA polymerase RPOA on an arginine located in the C-terminal region. ADP-ribosylation of RPOA alpha subunit enhances the transcription of viral early genes. Also ribosylates RPOA subunits beta, beta' and sigma 70 and performs an autoribosylation reaction. In Escherichia coli (Bacteriophage T2), this protein is NAD(+)--arginine ADP-ribosyltransferase (alt).